An 83-amino-acid polypeptide reads, in one-letter code: Cytochrome c oxidase subunit 7A2, mitochondrial (83 aa).

A mitochondrion-targeting transit peptide spans 1 to 23 (MLRNLLALRQIAKRTISTSSRRQ). Residues 24 to 48 (FENKVPEKQKLFQEDNGIPVHLKGG) are Mitochondrial matrix-facing. At K33 the chain carries N6-acetyllysine. The chain crosses the membrane as a helical span at residues 49–77 (IADALLYRATLILTVGGTAYAMYELAVAS). Topologically, residues 78–83 (FPKKQD) are mitochondrial intermembrane.

The protein belongs to the cytochrome c oxidase VIIa family. Component of the cytochrome c oxidase (complex IV, CIV), a multisubunit enzyme composed of 14 subunits. The complex is composed of a catalytic core of 3 subunits MT-CO1, MT-CO2 and MT-CO3, encoded in the mitochondrial DNA, and 11 supernumerary subunits COX4I1 (or COX4I2), COX5A, COX5B, COX6A2 (or COX6A1), COX6B1 (or COX6B2), COX6C, COX7A1 (or COX7A2), COX7B, COX7C, COX8B and NDUFA4, which are encoded in the nuclear genome. The complex exists as a monomer or a dimer and forms supercomplexes (SCs) in the inner mitochondrial membrane with NADH-ubiquinone oxidoreductase (complex I, CI) and ubiquinol-cytochrome c oxidoreductase (cytochrome b-c1 complex, complex III, CIII), resulting in different assemblies (supercomplex SCI(1)III(2)IV(1) and megacomplex MCI(2)III(2)IV(2)). Interacts with PET100.

Its subcellular location is the mitochondrion inner membrane. It participates in energy metabolism; oxidative phosphorylation. In terms of biological role, component of the cytochrome c oxidase, the last enzyme in the mitochondrial electron transport chain which drives oxidative phosphorylation. The respiratory chain contains 3 multisubunit complexes succinate dehydrogenase (complex II, CII), ubiquinol-cytochrome c oxidoreductase (cytochrome b-c1 complex, complex III, CIII) and cytochrome c oxidase (complex IV, CIV), that cooperate to transfer electrons derived from NADH and succinate to molecular oxygen, creating an electrochemical gradient over the inner membrane that drives transmembrane transport and the ATP synthase. Cytochrome c oxidase is the component of the respiratory chain that catalyzes the reduction of oxygen to water. Electrons originating from reduced cytochrome c in the intermembrane space (IMS) are transferred via the dinuclear copper A center (CU(A)) of subunit 2 and heme A of subunit 1 to the active site in subunit 1, a binuclear center (BNC) formed by heme A3 and copper B (CU(B)). The BNC reduces molecular oxygen to 2 water molecules using 4 electrons from cytochrome c in the IMS and 4 protons from the mitochondrial matrix. This is Cytochrome c oxidase subunit 7A2, mitochondrial (COX7A2) from Bos taurus (Bovine).